The chain runs to 162 residues: Transcriptional repressor NrdR (162 aa).

A disordered region spans residues 1–21 (MNCPDCGNGRTRVIDTGASSD). Residues 3 to 34 (CPDCGNGRTRVIDTGASSDGASVRRRRECQRC) fold into a zinc finger. The 91-residue stretch at 49 to 139 (LQVKKRDGTI…VYKAFSEPQE (91 aa)) folds into the ATP-cone domain.

This sequence belongs to the NrdR family. Requires Zn(2+) as cofactor.

In terms of biological role, negatively regulates transcription of bacterial ribonucleotide reductase nrd genes and operons by binding to NrdR-boxes. This Natronomonas pharaonis (strain ATCC 35678 / DSM 2160 / CIP 103997 / JCM 8858 / NBRC 14720 / NCIMB 2260 / Gabara) (Halobacterium pharaonis) protein is Transcriptional repressor NrdR.